We begin with the raw amino-acid sequence, 556 residues long: DNA ligase B (556 aa).

Lys-124 (N6-AMP-lysine intermediate) is an active-site residue.

This sequence belongs to the NAD-dependent DNA ligase family. LigB subfamily.

The enzyme catalyses NAD(+) + (deoxyribonucleotide)n-3'-hydroxyl + 5'-phospho-(deoxyribonucleotide)m = (deoxyribonucleotide)n+m + AMP + beta-nicotinamide D-nucleotide.. Catalyzes the formation of phosphodiester linkages between 5'-phosphoryl and 3'-hydroxyl groups in double-stranded DNA using NAD as a coenzyme and as the energy source for the reaction. The protein is DNA ligase B of Pseudomonas fluorescens (strain ATCC BAA-477 / NRRL B-23932 / Pf-5).